The primary structure comprises 416 residues: E3 ubiquitin-protein ligase RNFT1 (416 aa).

The segment covering 27 to 45 (QSSSGHTHHQPGSNDSPSV) has biased composition (polar residues). Disordered regions lie at residues 27 to 50 (QSSS…MSLP) and 63 to 116 (GDVT…ADSR). Positions 77–86 (GARSSSRRVR) are enriched in basic residues. 6 consecutive transmembrane segments (helical) span residues 146–166 (LVVQ…TFLY), 184–204 (LQCL…YYTF), 214–234 (VFMN…VVGI), 237–257 (FIGK…PSFV), 265–287 (YWYM…PVWF), and 302–322 (WHFG…IIFG). The required for ubiquitin ligase activity and for protection against ER stress-induced cell death stretch occupies residues 349–400 (CSEVDGMCAICQAEFIKPIVLVCQHVFCEECISLWFNKEKTCPLCRTVISNQ). Residues 356 to 394 (CAICQAEFIKPIVLVCQHVFCEECISLWFNKEKTCPLCR) form an RING-type zinc finger.

Its subcellular location is the endoplasmic reticulum membrane. It carries out the reaction S-ubiquitinyl-[E2 ubiquitin-conjugating enzyme]-L-cysteine + [acceptor protein]-L-lysine = [E2 ubiquitin-conjugating enzyme]-L-cysteine + N(6)-ubiquitinyl-[acceptor protein]-L-lysine.. It participates in protein modification; protein ubiquitination. E3 ubiquitin-protein ligase that acts in the endoplasmic reticulum (ER)-associated degradation (ERAD) pathway, which targets misfolded proteins that accumulate in the endoplasmic reticulum (ER) for ubiquitination and subsequent proteasome-mediated degradation. Protects cells from ER stress-induced apoptosis. The polypeptide is E3 ubiquitin-protein ligase RNFT1 (rnft1) (Xenopus tropicalis (Western clawed frog)).